Consider the following 105-residue polypeptide: Iron-sulfur cluster assembly protein CyaY (105 aa).

It belongs to the frataxin family.

Functionally, involved in iron-sulfur (Fe-S) cluster assembly. May act as a regulator of Fe-S biogenesis. This Paraburkholderia phytofirmans (strain DSM 17436 / LMG 22146 / PsJN) (Burkholderia phytofirmans) protein is Iron-sulfur cluster assembly protein CyaY.